The primary structure comprises 318 residues: Thymidylate synthase (318 aa).

DUMP contacts are provided by residues arginine 25 and 180–181 (RR). Cysteine 200 (nucleophile) is an active-site residue. DUMP contacts are provided by residues 220–223 (RSGD), asparagine 231, and 261–263 (HIY). Position 223 (aspartate 223) interacts with (6R)-5,10-methylene-5,6,7,8-tetrahydrofolate. Position 317 (alanine 317) interacts with (6R)-5,10-methylene-5,6,7,8-tetrahydrofolate.

It belongs to the thymidylate synthase family. Bacterial-type ThyA subfamily. In terms of assembly, homodimer.

The protein resides in the cytoplasm. It catalyses the reaction dUMP + (6R)-5,10-methylene-5,6,7,8-tetrahydrofolate = 7,8-dihydrofolate + dTMP. It participates in pyrimidine metabolism; dTTP biosynthesis. Its function is as follows. Catalyzes the reductive methylation of 2'-deoxyuridine-5'-monophosphate (dUMP) to 2'-deoxythymidine-5'-monophosphate (dTMP) while utilizing 5,10-methylenetetrahydrofolate (mTHF) as the methyl donor and reductant in the reaction, yielding dihydrofolate (DHF) as a by-product. This enzymatic reaction provides an intracellular de novo source of dTMP, an essential precursor for DNA biosynthesis. This is Thymidylate synthase from Lactobacillus helveticus (strain DPC 4571).